The chain runs to 226 residues: ATP synthase F(0) complex subunit a (226 aa).

Transmembrane regions (helical) follow at residues Leu-5 to Ile-25, Trp-68 to Leu-88, Gln-97 to Phe-117, Phe-136 to Trp-156, and Ala-189 to Ile-209.

Belongs to the ATPase A chain family. In terms of assembly, component of the ATP synthase complex composed at least of ATP5F1A/subunit alpha, ATP5F1B/subunit beta, ATP5MC1/subunit c (homooctomer), MT-ATP6/subunit a, MT-ATP8/subunit 8, ATP5ME/subunit e, ATP5MF/subunit f, ATP5MG/subunit g, ATP5MK/subunit k, ATP5MJ/subunit j, ATP5F1C/subunit gamma, ATP5F1D/subunit delta, ATP5F1E/subunit epsilon, ATP5PF/subunit F6, ATP5PB/subunit b, ATP5PD/subunit d, ATP5PO/subunit OSCP. ATP synthase complex consists of a soluble F(1) head domain (subunits alpha(3) and beta(3)) - the catalytic core - and a membrane F(0) domain - the membrane proton channel (subunits c, a, 8, e, f, g, k and j). These two domains are linked by a central stalk (subunits gamma, delta, and epsilon) rotating inside the F1 region and a stationary peripheral stalk (subunits F6, b, d, and OSCP). Interacts with DNAJC30; interaction is direct.

It localises to the mitochondrion inner membrane. The enzyme catalyses H(+)(in) = H(+)(out). Subunit a, of the mitochondrial membrane ATP synthase complex (F(1)F(0) ATP synthase or Complex V) that produces ATP from ADP in the presence of a proton gradient across the membrane which is generated by electron transport complexes of the respiratory chain. ATP synthase complex consist of a soluble F(1) head domain - the catalytic core - and a membrane F(1) domain - the membrane proton channel. These two domains are linked by a central stalk rotating inside the F(1) region and a stationary peripheral stalk. During catalysis, ATP synthesis in the catalytic domain of F(1) is coupled via a rotary mechanism of the central stalk subunits to proton translocation. With the subunit c (ATP5MC1), forms the proton-conducting channel in the F(0) domain, that contains two crucial half-channels (inlet and outlet) that facilitate proton movement from the mitochondrial intermembrane space (IMS) into the matrix. Protons are taken up via the inlet half-channel and released through the outlet half-channel, following a Grotthuss mechanism. This is ATP synthase F(0) complex subunit a from Balaenoptera physalus (Fin whale).